A 581-amino-acid chain; its full sequence is Intermediate filament protein ifa-3 (581 aa).

Residues 1–33 are disordered; the sequence is MADPDSYRSSITSRPAFNRTVTSSTQNYGTPAS. The interval 1–74 is head; sequence MADPDSYRSS…RDDREREKKE (74 aa). Residues 7 to 33 are compositionally biased toward polar residues; it reads YRSSITSRPAFNRTVTSSTQNYGTPAS. Residues 71–424 form the IF rod domain; it reads EKKEITELND…RMLEGNSEEN (354 aa). The tract at residues 75 to 106 is coil 1A; sequence ITELNDRLASYIGKVRFLAAQNRKLEADLNVL. Positions 107–120 are linker 1; the sequence is QSRFGKSTGSVKIM. The segment at 121–258 is coil 1B; that stretch reads YEMEITTATN…RGFETELKDL (138 aa). A linker 12 region spans residues 259–276; it reads QAQAARDTTSENREYFKN. The tract at residues 277–424 is coil 2; that stretch reads ELMNSIRDIR…RMLEGNSEEN (148 aa). Residues 425 to 578 are tail; that stretch reads GLRQLVEKVV…THMQRQSQQT (154 aa). An LTD domain is found at 457-574; the sequence is SRTSYQRSAK…EERATHMQRQ (118 aa).

This sequence belongs to the intermediate filament family. In terms of assembly, forms some heteromeric filaments with ifb-1. As to expression, expressed in the embryonic and larval hypodermis. Also expressed in the ventral nerve cord of larvae.

The protein resides in the cytoplasm. In terms of biological role, cytoplasmic intermediate filaments provide mechanical strength to cells. Essential protein, involved in attachment structures in epidermal cells that connect muscles to the external cuticle. Required for epidermal morphogenesis in embryos. Probable component of embryonic epidermal attachment structures. This is Intermediate filament protein ifa-3 (ifa-3) from Caenorhabditis elegans.